We begin with the raw amino-acid sequence, 65 residues long: Large ribosomal subunit protein bL35 (65 aa).

The tract at residues 1-26 (MPKIKTVRGAAKRFKKTASGGFKRKQ) is disordered. A compositionally biased stretch (basic residues) spans 10-26 (AAKRFKKTASGGFKRKQ).

The protein belongs to the bacterial ribosomal protein bL35 family.

This chain is Large ribosomal subunit protein bL35, found in Actinobacillus succinogenes (strain ATCC 55618 / DSM 22257 / CCUG 43843 / 130Z).